The sequence spans 264 residues: tRNA pseudouridine synthase A (264 aa).

Asp-51 (nucleophile) is an active-site residue. Tyr-109 is a substrate binding site.

It belongs to the tRNA pseudouridine synthase TruA family. As to quaternary structure, homodimer.

The enzyme catalyses uridine(38/39/40) in tRNA = pseudouridine(38/39/40) in tRNA. Its function is as follows. Formation of pseudouridine at positions 38, 39 and 40 in the anticodon stem and loop of transfer RNAs. This chain is tRNA pseudouridine synthase A, found in Aromatoleum aromaticum (strain DSM 19018 / LMG 30748 / EbN1) (Azoarcus sp. (strain EbN1)).